The following is a 70-amino-acid chain: Conotoxin Cal6.11 (70 aa).

The first 22 residues, 1 to 22 (MKLTCVLIIAVLILTACQFIAA), serve as a signal peptide directing secretion. A propeptide spanning residues 23–43 (DNTEYRKWRRSGTSTGMRLGS) is cleaved from the precursor. 3 disulfides stabilise this stretch: cysteine 46–cysteine 57, cysteine 50–cysteine 62, and cysteine 56–cysteine 69. 2 positions are modified to 4-hydroxyproline: proline 48 and proline 58. 4-carboxyglutamate occurs at positions 60 and 67.

This sequence belongs to the conotoxin O1 superfamily. Expressed by the venom duct.

It localises to the secreted. In terms of biological role, probable neurotoxin with unknown target. Possibly targets ion channels. The sequence is that of Conotoxin Cal6.11 from Californiconus californicus (California cone).